A 121-amino-acid chain; its full sequence is Large ribosomal subunit protein uL14 (121 aa).

It belongs to the universal ribosomal protein uL14 family. Part of the 50S ribosomal subunit. Forms a cluster with proteins L3 and L19. In the 70S ribosome, L14 and L19 interact and together make contacts with the 16S rRNA in bridges B5 and B8.

Binds to 23S rRNA. Forms part of two intersubunit bridges in the 70S ribosome. The chain is Large ribosomal subunit protein uL14 from Prochlorococcus marinus (strain MIT 9313).